The primary structure comprises 326 residues: Flap endonuclease 1 (326 aa).

The interval 1–98 (MGVQFNDSIP…KTREERRKVK (98 aa)) is N-domain. 7 residues coordinate Mg(2+): D27, D80, E152, E154, D173, D175, and D224. Residues 116–245 (DMQKYAKRIN…KKALTIIKNK (130 aa)) are I-domain. Positions 318-326 (SQTSLDSWF) are interaction with PCNA.

It belongs to the XPG/RAD2 endonuclease family. FEN1 subfamily. Interacts with PCNA. PCNA stimulates the nuclease activity without altering cleavage specificity. Mg(2+) serves as cofactor.

In terms of biological role, structure-specific nuclease with 5'-flap endonuclease and 5'-3' exonuclease activities involved in DNA replication and repair. During DNA replication, cleaves the 5'-overhanging flap structure that is generated by displacement synthesis when DNA polymerase encounters the 5'-end of a downstream Okazaki fragment. Binds the unpaired 3'-DNA end and kinks the DNA to facilitate 5' cleavage specificity. Cleaves one nucleotide into the double-stranded DNA from the junction in flap DNA, leaving a nick for ligation. Also involved in the base excision repair (BER) pathway. Acts as a genome stabilization factor that prevents flaps from equilibrating into structures that lead to duplications and deletions. Also possesses 5'-3' exonuclease activity on nicked or gapped double-stranded DNA. This is Flap endonuclease 1 from Methanococcus aeolicus (strain ATCC BAA-1280 / DSM 17508 / OCM 812 / Nankai-3).